The sequence spans 182 residues: Transcription termination/antitermination protein NusG (182 aa).

The KOW domain maps to 131-163 (VGEQVRIKSGPFANQVGEVQEIETDKFKLTVLV).

The protein belongs to the NusG family.

In terms of biological role, participates in transcription elongation, termination and antitermination. The protein is Transcription termination/antitermination protein NusG of Staphylococcus aureus (strain NCTC 8325 / PS 47).